The primary structure comprises 59 residues: Large ribosomal subunit protein bL32 (59 aa).

Disordered regions lie at residues 1–23 and 35–59; these read MAVQQNKKSPSKRGMHRSHDFLT and EVHLRHHVSPNGYYRGKKVVKTKND. A compositionally biased stretch (basic residues) spans 49–59; it reads RGKKVVKTKND.

It belongs to the bacterial ribosomal protein bL32 family.

This chain is Large ribosomal subunit protein bL32, found in Burkholderia ambifaria (strain MC40-6).